Reading from the N-terminus, the 662-residue chain is Transketolase (662 aa).

A substrate-binding site is contributed by H28. Thiamine diphosphate is bound by residues H68 and 115-117 (GPL). D156 lines the Mg(2+) pocket. Thiamine diphosphate is bound by residues G157 and N186. The Mg(2+) site is built by N186 and I188. Substrate is bound by residues H261, R356, and S383. H261 provides a ligand contact to thiamine diphosphate. E410 (proton donor) is an active-site residue. Position 436 (F436) interacts with thiamine diphosphate. H460, D468, and R519 together coordinate substrate.

Belongs to the transketolase family. In terms of assembly, homodimer. Requires Mg(2+) as cofactor. The cofactor is Ca(2+). Mn(2+) is required as a cofactor. It depends on Co(2+) as a cofactor. Thiamine diphosphate serves as cofactor.

It catalyses the reaction D-sedoheptulose 7-phosphate + D-glyceraldehyde 3-phosphate = aldehydo-D-ribose 5-phosphate + D-xylulose 5-phosphate. The protein operates within carbohydrate biosynthesis; Calvin cycle. Its pathway is carbohydrate degradation; pentose phosphate pathway. In terms of biological role, catalyzes the transfer of a two-carbon ketol group from a ketose donor to an aldose acceptor, via a covalent intermediate with the cofactor thiamine pyrophosphate. The protein is Transketolase (tkt) of Staphylococcus aureus (strain MRSA252).